The following is a 128-amino-acid chain: UPF0102 protein GSU0650 (128 aa).

This sequence belongs to the UPF0102 family.

The protein is UPF0102 protein GSU0650 of Geobacter sulfurreducens (strain ATCC 51573 / DSM 12127 / PCA).